Here is a 325-residue protein sequence, read N- to C-terminus: Tetraacyldisaccharide 4'-kinase (325 aa).

55-62 serves as a coordination point for ATP; the sequence is TAGGNGKT.

It belongs to the LpxK family.

It carries out the reaction a lipid A disaccharide + ATP = a lipid IVA + ADP + H(+). It participates in glycolipid biosynthesis; lipid IV(A) biosynthesis; lipid IV(A) from (3R)-3-hydroxytetradecanoyl-[acyl-carrier-protein] and UDP-N-acetyl-alpha-D-glucosamine: step 6/6. Transfers the gamma-phosphate of ATP to the 4'-position of a tetraacyldisaccharide 1-phosphate intermediate (termed DS-1-P) to form tetraacyldisaccharide 1,4'-bis-phosphate (lipid IVA). The sequence is that of Tetraacyldisaccharide 4'-kinase from Citrobacter koseri (strain ATCC BAA-895 / CDC 4225-83 / SGSC4696).